We begin with the raw amino-acid sequence, 281 residues long: Bifunctional protein FolD (281 aa).

NADP(+) is bound by residues Asn159–Ser161, Ser184, and Ile225.

This sequence belongs to the tetrahydrofolate dehydrogenase/cyclohydrolase family. As to quaternary structure, homodimer.

It catalyses the reaction (6R)-5,10-methylene-5,6,7,8-tetrahydrofolate + NADP(+) = (6R)-5,10-methenyltetrahydrofolate + NADPH. The enzyme catalyses (6R)-5,10-methenyltetrahydrofolate + H2O = (6R)-10-formyltetrahydrofolate + H(+). The protein operates within one-carbon metabolism; tetrahydrofolate interconversion. Its function is as follows. Catalyzes the oxidation of 5,10-methylenetetrahydrofolate to 5,10-methenyltetrahydrofolate and then the hydrolysis of 5,10-methenyltetrahydrofolate to 10-formyltetrahydrofolate. The polypeptide is Bifunctional protein FolD (Thermoplasma volcanium (strain ATCC 51530 / DSM 4299 / JCM 9571 / NBRC 15438 / GSS1)).